The following is a 105-amino-acid chain: Iron-sulfur cluster assembly protein CyaY (105 aa).

It belongs to the frataxin family.

In terms of biological role, involved in iron-sulfur (Fe-S) cluster assembly. May act as a regulator of Fe-S biogenesis. The sequence is that of Iron-sulfur cluster assembly protein CyaY from Chromobacterium violaceum (strain ATCC 12472 / DSM 30191 / JCM 1249 / CCUG 213 / NBRC 12614 / NCIMB 9131 / NCTC 9757 / MK).